Here is a 31-residue protein sequence, read N- to C-terminus: uncharacterized protein (31 aa).

This is an uncharacterized protein from Archaeoglobus fulgidus (strain ATCC 49558 / DSM 4304 / JCM 9628 / NBRC 100126 / VC-16).